A 1037-amino-acid chain; its full sequence is Guanine nucleotide-binding protein G(s) subunit alpha isoforms XLas (1037 aa).

4 disordered regions span residues 1–105 (MGVR…MPFE), 185–224 (APGG…EETM), 283–588 (SPSQ…TSGC), and 640–666 (PLAE…KKRS). Low complexity predominate over residues 33-46 (APGAAAPGAGPSPA). A compositionally biased stretch (basic and acidic residues) spans 343–354 (PDKRERAERPPV). 2 stretches are compositionally biased toward low complexity: residues 361–408 (MEGA…GATP) and 416–521 (APAD…PASG). Residues 553–565 (GKSESSRGRRVYY) show a composition bias toward basic and acidic residues. The segment covering 572–583 (SDDDSSGDESDD) has biased composition (acidic residues). The span at 640-660 (PLAEKRRQMRKEALEKRAQKR) shows a compositional bias: basic and acidic residues. A coiled-coil region spans residues 641–667 (LAEKRRQMRKEALEKRAQKRAEKKRSK). The region spanning 682–1037 (CTHRLLLLGA…RMHLRQYELL (356 aa)) is the G-alpha domain. The tract at residues 685 to 698 (RLLLLGAGESGKST) is G1 motif. Position 690–698 (690–698 (GAGESGKST)) interacts with GTP. S697 serves as a coordination point for Mg(2+). The interval 711–734 (FNGEGGEEDPQAARSNSDGEKATK) is disordered. The stretch at 730 to 756 (EKATKVQDIKNNLKEAIETIVAAMSNL) forms a coiled coil. The tract at residues 839–847 (DLLRCRVLT) is G2 motif. Residues 840-847 (LLRCRVLT), 866-870 (DVGGQ), and 935-938 (NKQD) each bind GTP. ADP-ribosylarginine; by cholera toxin is present on R844. T847 provides a ligand contact to Mg(2+). The G3 motif stretch occupies residues 862–871 (FHMFDVGGQR). The segment at 931-938 (ILFLNKQD) is G4 motif. S995 is modified (phosphoserine). The tract at residues 1007 to 1012 (TCAVDT) is G5 motif. A GTP-binding site is contributed by A1009.

It belongs to the G-alpha family. G(s) subfamily. G proteins are composed of 3 units; alpha, beta and gamma. The alpha chain contains the guanine nucleotide binding site. Interacts through its N-terminal region with ALEX which is produced from the same locus in a different open reading frame. This interaction may inhibit its adenylyl cyclase-stimulating activity. Interacts with MAGED2.

The protein resides in the cell membrane. It is found in the apical cell membrane. It catalyses the reaction GTP + H2O = GDP + phosphate + H(+). In terms of biological role, guanine nucleotide-binding proteins (G proteins) function as transducers in numerous signaling pathways controlled by G protein-coupled receptors (GPCRs). The alpha chain contains the guanine nucleotide binding site and alternates between an active, GTP-bound state and an inactive, GDP-bound state. Signaling by an activated GPCR promotes GDP release and GTP binding. The alpha subunit has a low GTPase activity that converts bound GTP to GDP, thereby terminating the signal. Both GDP release and GTP hydrolysis are modulated by numerous regulatory proteins. Signaling involves the activation of adenylyl cyclases, resulting in increased levels of the signaling molecule cAMP. GNAS functions downstream of several GPCRs, including beta-adrenergic receptors. XLas isoforms interact with the same set of receptors as Gnas isoforms. The protein is Guanine nucleotide-binding protein G(s) subunit alpha isoforms XLas (GNAS) of Homo sapiens (Human).